A 247-amino-acid polypeptide reads, in one-letter code: Uridylate kinase (247 aa).

An ATP-binding site is contributed by 16–19; the sequence is KLSG. Gly-58 contributes to the UMP binding site. ATP is bound by residues Gly-59 and Arg-63. Residues Asp-78 and 139–146 each bind UMP; that span reads TGNPFFTT. Positions 166, 172, and 175 each coordinate ATP.

The protein belongs to the UMP kinase family. In terms of assembly, homohexamer.

The protein resides in the cytoplasm. The catalysed reaction is UMP + ATP = UDP + ADP. Its pathway is pyrimidine metabolism; CTP biosynthesis via de novo pathway; UDP from UMP (UMPK route): step 1/1. With respect to regulation, inhibited by UTP. Functionally, catalyzes the reversible phosphorylation of UMP to UDP. This chain is Uridylate kinase, found in Xylella fastidiosa (strain 9a5c).